We begin with the raw amino-acid sequence, 216 residues long: Transmembrane emp24 domain-containing protein eca (216 aa).

Positions 1–20 are cleaved as a signal peptide; that stretch reads MRDQFISLALMLCILHSACG. Over 21-182 the chain is Lumenal; that stretch reads LYFHISETER…FRHTSESTNS (162 aa). A GOLD domain is found at 30–126; that stretch reads RKCFIEEVPD…QLRVHLDIQV (97 aa). Residues 134–164 are a coiled coil; sequence ANVAQKEKLTELQLRIRQLLDQVEQITKEQN. The chain crosses the membrane as a helical span at residues 183 to 203; that stretch reads RVLWWSLAQTVVLVCMGFWQM. The Cytoplasmic segment spans residues 204–216; the sequence is RHLKSFFEAKKLV. The short motif at 213 to 216 is the Prevents secretion from ER element; it reads KKLV.

The protein belongs to the EMP24/GP25L family.

It is found in the endoplasmic reticulum membrane. Eca and bai are essential, though not redundant, for dorsoventral patterning of the embryo. Specifically required during early embryogenesis for the activity of maternal tkv, while the zygotic tkv is not affected. Involved in Golgi organization. In Drosophila erecta (Fruit fly), this protein is Transmembrane emp24 domain-containing protein eca.